The primary structure comprises 336 residues: MKKNTLFLGLVFIGILTFLVNLLAKTPFALNANLSALTIAILLGILFGNTFYPKISQYTAQGVIFAKGTLLRLGIILYGFRLTLQDISNVGINAIATDTIMLISTFLLTLWLGIRYLKMDKQIVYLTAGGCSICGAAAIMSMQPVTKAESHHVSIAVAVIVIFGTISMFLYPLMYPYLATWLNEHQFGIYIGSSVHEVAQVYAAGGNISPAVADTAVISKMIRVMMLAPFLLLVSWLLTKQNDQAKTTNISIPWFAFLFILMAVINSFSLIPAHIVAWIVEIDSLLLIAAMTALGLTTHISAIKQAGIKPLILGALVLCWLVIGGFFVNVGISQLF.

10 consecutive transmembrane segments (helical) span residues Thr-5–Leu-23, Leu-30–Tyr-52, Gly-62–Leu-84, Gly-91–Gly-113, Ile-123–Met-140, Val-153–Tyr-175, Met-221–Leu-238, Ile-250–Ile-271, Ile-275–Thr-297, and Pro-310–Ile-332.

It belongs to the UPF0324 family.

Its subcellular location is the cell membrane. The polypeptide is UPF0324 membrane protein PM1461 (Pasteurella multocida (strain Pm70)).